The following is a 289-amino-acid chain: MSGPAIDASPALTFNQSSASIQQRRLSTGRQMWVLYRRFAAPSLLNGEVLTTVGAPIIFMVGFYIPFAIPWNQFVGGASSGVASNLGQYITPLVTLQAVSFAAIGSGFRAATDSLLGVNRRFQSMPMAPLTPLLARVWVAVDRCFTGLVISLVCGYVIGFRFHRGALYIVGFCLLVIAIGAVLSFAADLVGTVTRNPDAMLPLLSLPILIFGLLSIGLMPLKLFPHWIHPFVRNQPISQFVAALRALAGDTTKTASQVSWPVMAPTLTWLFAFVVILALSSTIVLARRP.

Residues 47–282 (GEVLTTVGAP…FVVILALSST (236 aa)) form the ABC transmembrane type-2 domain. A run of 6 helical transmembrane segments spans residues 49-69 (VLTT…PFAI), 88-108 (QYIT…GSGF), 138-158 (WVAV…GYVI), 166-186 (ALYI…LSFA), 199-219 (AMLP…IGLM), and 266-286 (TLTW…IVLA).

Belongs to the ABC-2 integral membrane protein family. As to quaternary structure, the complex is composed of two ATP-binding proteins (DrrA) and two transmembrane proteins (DrrB and DrrC).

It localises to the cell membrane. In terms of biological role, part of the ABC transporter complex DrrABC involved in doxorubicin resistance. Probably responsible for the translocation of the substrate across the membrane. This is Doxorubicin resistance ABC transporter permease protein DrrB (drrB) from Mycobacterium tuberculosis (strain CDC 1551 / Oshkosh).